The sequence spans 295 residues: Host-inducible protein A (295 aa).

The disordered stretch occupies residues Met-1 to Glu-20.

This sequence belongs to the NopP family.

The polypeptide is Host-inducible protein A (Rhizobium fredii (Sinorhizobium fredii)).